A 442-amino-acid chain; its full sequence is Glutamyl-tRNA reductase (442 aa).

Residues 49-52 (TCNR), S109, 114-116 (ESQ), and Q120 each bind substrate. C50 functions as the Nucleophile in the catalytic mechanism. NADP(+) is bound at residue 189–194 (GAGAMS).

This sequence belongs to the glutamyl-tRNA reductase family. As to quaternary structure, homodimer.

The catalysed reaction is (S)-4-amino-5-oxopentanoate + tRNA(Glu) + NADP(+) = L-glutamyl-tRNA(Glu) + NADPH + H(+). The protein operates within porphyrin-containing compound metabolism; protoporphyrin-IX biosynthesis; 5-aminolevulinate from L-glutamyl-tRNA(Glu): step 1/2. Its function is as follows. Catalyzes the NADPH-dependent reduction of glutamyl-tRNA(Glu) to glutamate 1-semialdehyde (GSA). This Kineococcus radiotolerans (strain ATCC BAA-149 / DSM 14245 / SRS30216) protein is Glutamyl-tRNA reductase.